A 170-amino-acid chain; its full sequence is Putative invertase inhibitor (170 aa).

An N-terminal signal peptide occupies residues 1 to 14 (MKLSFSLCIFFLIS). 2 disulfide bridges follow: C22/C37 and C93/C133.

The protein belongs to the PMEI family. Expressed in pollen (at protein level). Expressed in pollen.

The sequence is that of Putative invertase inhibitor from Platanus orientalis (Oriental plane-tree).